A 94-amino-acid chain; its full sequence is Co-chaperonin GroES (94 aa).

Belongs to the GroES chaperonin family. Heptamer of 7 subunits arranged in a ring. Interacts with the chaperonin GroEL.

The protein resides in the cytoplasm. Functionally, together with the chaperonin GroEL, plays an essential role in assisting protein folding. The GroEL-GroES system forms a nano-cage that allows encapsulation of the non-native substrate proteins and provides a physical environment optimized to promote and accelerate protein folding. GroES binds to the apical surface of the GroEL ring, thereby capping the opening of the GroEL channel. In Clostridium botulinum (strain Alaska E43 / Type E3), this protein is Co-chaperonin GroES.